We begin with the raw amino-acid sequence, 103 residues long: Large ribosomal subunit protein uL24 (103 aa).

The segment at Tyr-70–Asn-103 is disordered.

The protein belongs to the universal ribosomal protein uL24 family. Part of the 50S ribosomal subunit.

Functionally, one of two assembly initiator proteins, it binds directly to the 5'-end of the 23S rRNA, where it nucleates assembly of the 50S subunit. Its function is as follows. One of the proteins that surrounds the polypeptide exit tunnel on the outside of the subunit. The sequence is that of Large ribosomal subunit protein uL24 from Lactiplantibacillus plantarum (strain ATCC BAA-793 / NCIMB 8826 / WCFS1) (Lactobacillus plantarum).